The sequence spans 379 residues: F-box protein At1g30200 (379 aa).

In terms of domain architecture, F-box spans 24–72 (DHFDLLPDSLLLLIFDKVADVKDLGRCCIVSRRFHSLVPFVENVLVRVD).

This Arabidopsis thaliana (Mouse-ear cress) protein is F-box protein At1g30200.